The primary structure comprises 321 residues: Probable nucleosome assembly protein (321 aa).

Over residues 272-298 (EENDYDFGEDFEDEEGEDDDEEDDEEE) the composition is skewed to acidic residues. Positions 272 to 321 (EENDYDFGEDFEDEEGEDDDEEDDEEEQTIKKPSGKGKAQPQQPQDCKQQ) are disordered. The segment covering 311–321 (QPQQPQDCKQQ) has biased composition (low complexity).

This sequence belongs to the nucleosome assembly protein (NAP) family.

Its subcellular location is the nucleus. In terms of biological role, may modulate chromatin structure by regulation of histone octamer formation. The polypeptide is Probable nucleosome assembly protein (nap1) (Dictyostelium discoideum (Social amoeba)).